The sequence spans 261 residues: WW domain-binding protein 2 (261 aa).

One can recognise a GRAM domain in the interval 1–84 (MALNKNHSEG…YLMKDCEIKQ (84 aa)). At Tyr192 the chain carries Phosphotyrosine; by YES and SRC. The PPxY motif 1 signature appears at 196–200 (PPPPY). A compositionally biased stretch (pro residues) spans 196–209 (PPPPYPGPMEPPVS). Positions 196 to 261 (PPPPYPGPME…YYPPEDKKTQ (66 aa)) are disordered. Positions 218 to 230 (AAEAKAAEAAASA) are enriched in low complexity. Phosphotyrosine; by YES and SRC is present on Tyr231. Residues 245–254 (SQPPPPPYYP) show a composition bias toward pro residues. The short motif at 248–252 (PPPPY) is the PPxY motif 2 element.

In terms of assembly, binds to the WW domain of YAP1, WWP1 and WWP2. Interacts with NEDD4. Interacts with ESR1 and UBE3A. In terms of processing, phosphorylated in repsonse to EGF as well as estrogen and progesterone hormones. Tyr-192 and Tyr-231 are phosphorylated by YES and SRC inducing nuclear translocation. Ubiquitous.

It is found in the cytoplasm. It localises to the nucleus. In terms of biological role, acts as a transcriptional coactivator of estrogen and progesterone receptors (ESR1 and PGR) upon hormone activation. In presence of estrogen, binds to ESR1-responsive promoters. Synergizes with YAP1 to enhance PGR activity. Modulates expression of post-synaptic scaffolding proteins via regulation of ESR1, ESR2 and PGR. The chain is WW domain-binding protein 2 from Homo sapiens (Human).